Reading from the N-terminus, the 306-residue chain is Agmatinase (306 aa).

Histidine 126, aspartate 149, histidine 151, aspartate 153, aspartate 230, and aspartate 232 together coordinate Mn(2+).

It belongs to the arginase family. Agmatinase subfamily. The cofactor is Mn(2+).

It carries out the reaction agmatine + H2O = urea + putrescine. Its pathway is amine and polyamine biosynthesis; putrescine biosynthesis via agmatine pathway; putrescine from agmatine: step 1/1. Catalyzes the formation of putrescine from agmatine. The polypeptide is Agmatinase (Shigella boydii serotype 18 (strain CDC 3083-94 / BS512)).